The following is a 216-amino-acid chain: Thiamine-phosphate synthase (216 aa).

Residues 40-44 and asparagine 72 contribute to the 4-amino-2-methyl-5-(diphosphooxymethyl)pyrimidine site; that span reads QLRIK. Residues aspartate 73 and aspartate 92 each coordinate Mg(2+). Serine 111 lines the 4-amino-2-methyl-5-(diphosphooxymethyl)pyrimidine pocket. 137–139 is a 2-[(2R,5Z)-2-carboxy-4-methylthiazol-5(2H)-ylidene]ethyl phosphate binding site; that stretch reads TTT. Lysine 140 serves as a coordination point for 4-amino-2-methyl-5-(diphosphooxymethyl)pyrimidine. 2-[(2R,5Z)-2-carboxy-4-methylthiazol-5(2H)-ylidene]ethyl phosphate contacts are provided by residues glycine 169 and 189 to 190; that span reads VS.

Belongs to the thiamine-phosphate synthase family. Mg(2+) serves as cofactor.

It carries out the reaction 2-[(2R,5Z)-2-carboxy-4-methylthiazol-5(2H)-ylidene]ethyl phosphate + 4-amino-2-methyl-5-(diphosphooxymethyl)pyrimidine + 2 H(+) = thiamine phosphate + CO2 + diphosphate. The catalysed reaction is 2-(2-carboxy-4-methylthiazol-5-yl)ethyl phosphate + 4-amino-2-methyl-5-(diphosphooxymethyl)pyrimidine + 2 H(+) = thiamine phosphate + CO2 + diphosphate. It catalyses the reaction 4-methyl-5-(2-phosphooxyethyl)-thiazole + 4-amino-2-methyl-5-(diphosphooxymethyl)pyrimidine + H(+) = thiamine phosphate + diphosphate. The protein operates within cofactor biosynthesis; thiamine diphosphate biosynthesis; thiamine phosphate from 4-amino-2-methyl-5-diphosphomethylpyrimidine and 4-methyl-5-(2-phosphoethyl)-thiazole: step 1/1. Its function is as follows. Condenses 4-methyl-5-(beta-hydroxyethyl)thiazole monophosphate (THZ-P) and 2-methyl-4-amino-5-hydroxymethyl pyrimidine pyrophosphate (HMP-PP) to form thiamine monophosphate (TMP). This is Thiamine-phosphate synthase from Photorhabdus laumondii subsp. laumondii (strain DSM 15139 / CIP 105565 / TT01) (Photorhabdus luminescens subsp. laumondii).